A 367-amino-acid polypeptide reads, in one-letter code: (E)-2-epi-beta-caryophyllene synthase (367 aa).

Mg(2+)-binding residues include D93, N234, and S238. The DDXXE motif motif lies at 93–97 (DDIAE).

It belongs to the terpene synthase family. Mg(2+) serves as cofactor. The cofactor is Mn(2+).

It carries out the reaction (2E,6E)-farnesyl diphosphate = (E)-2-epi-beta-caryophyllene + diphosphate. It participates in secondary metabolite biosynthesis; terpenoid biosynthesis. Sesquiterpene synthase converting farnesyl diphosphate to (E)-2-epi-beta-caryophyllene as the major product, and to two other unidentified sesquiterpenes. Has no diterpene synthase activity. The sequence is that of (E)-2-epi-beta-caryophyllene synthase from Selaginella moellendorffii (Spikemoss).